The chain runs to 1178 residues: DNA-directed RNA polymerase subunit beta (1178 aa).

The tract at residues 1–37 (MLEGCILADSRQSKTAASPSPSRPQSSSNNSVPGAPN) is disordered. The segment covering 18-33 (SPSPSRPQSSSNNSVP) has biased composition (low complexity).

This sequence belongs to the RNA polymerase beta chain family. As to quaternary structure, the RNAP catalytic core consists of 2 alpha, 1 beta, 1 beta' and 1 omega subunit. When a sigma factor is associated with the core the holoenzyme is formed, which can initiate transcription.

The enzyme catalyses RNA(n) + a ribonucleoside 5'-triphosphate = RNA(n+1) + diphosphate. DNA-dependent RNA polymerase catalyzes the transcription of DNA into RNA using the four ribonucleoside triphosphates as substrates. The sequence is that of DNA-directed RNA polymerase subunit beta from Mycobacterium tuberculosis (strain CDC 1551 / Oshkosh).